Here is a 368-residue protein sequence, read N- to C-terminus: Xaa-Pro dipeptidase (368 aa).

Mn(2+)-binding residues include Asp223, Asp234, His298, Glu327, and Glu341.

The protein belongs to the peptidase M24B family. Requires Mn(2+) as cofactor.

Its subcellular location is the cytoplasm. It catalyses the reaction Xaa-L-Pro dipeptide + H2O = an L-alpha-amino acid + L-proline. The polypeptide is Xaa-Pro dipeptidase (pepQ) (Lactobacillus helveticus (Lactobacillus suntoryeus)).